Reading from the N-terminus, the 379-residue chain is Arginine biosynthesis bifunctional protein ArgJ (379 aa).

Substrate contacts are provided by threonine 140, lysine 160, threonine 171, glutamate 249, asparagine 374, and threonine 379. Residue threonine 171 is the Nucleophile of the active site.

Belongs to the ArgJ family. In terms of assembly, heterotetramer of two alpha and two beta chains.

It is found in the cytoplasm. The enzyme catalyses N(2)-acetyl-L-ornithine + L-glutamate = N-acetyl-L-glutamate + L-ornithine. It carries out the reaction L-glutamate + acetyl-CoA = N-acetyl-L-glutamate + CoA + H(+). The protein operates within amino-acid biosynthesis; L-arginine biosynthesis; L-ornithine and N-acetyl-L-glutamate from L-glutamate and N(2)-acetyl-L-ornithine (cyclic): step 1/1. It participates in amino-acid biosynthesis; L-arginine biosynthesis; N(2)-acetyl-L-ornithine from L-glutamate: step 1/4. Its function is as follows. Catalyzes two activities which are involved in the cyclic version of arginine biosynthesis: the synthesis of N-acetylglutamate from glutamate and acetyl-CoA as the acetyl donor, and of ornithine by transacetylation between N(2)-acetylornithine and glutamate. The protein is Arginine biosynthesis bifunctional protein ArgJ of Archaeoglobus fulgidus (strain ATCC 49558 / DSM 4304 / JCM 9628 / NBRC 100126 / VC-16).